A 283-amino-acid chain; its full sequence is Bifunctional protein FolD (283 aa).

NADP(+) contacts are provided by residues 166–168 (GRS), serine 191, and threonine 232.

The protein belongs to the tetrahydrofolate dehydrogenase/cyclohydrolase family. Homodimer.

It catalyses the reaction (6R)-5,10-methylene-5,6,7,8-tetrahydrofolate + NADP(+) = (6R)-5,10-methenyltetrahydrofolate + NADPH. It carries out the reaction (6R)-5,10-methenyltetrahydrofolate + H2O = (6R)-10-formyltetrahydrofolate + H(+). It participates in one-carbon metabolism; tetrahydrofolate interconversion. Its function is as follows. Catalyzes the oxidation of 5,10-methylenetetrahydrofolate to 5,10-methenyltetrahydrofolate and then the hydrolysis of 5,10-methenyltetrahydrofolate to 10-formyltetrahydrofolate. In Halothermothrix orenii (strain H 168 / OCM 544 / DSM 9562), this protein is Bifunctional protein FolD.